We begin with the raw amino-acid sequence, 188 residues long: Peptidyl-tRNA hydrolase (188 aa).

Tyr-15 lines the tRNA pocket. His-20 acts as the Proton acceptor in catalysis. Residues Phe-63, Asn-65, and Asn-111 each coordinate tRNA.

It belongs to the PTH family. Monomer.

It is found in the cytoplasm. The catalysed reaction is an N-acyl-L-alpha-aminoacyl-tRNA + H2O = an N-acyl-L-amino acid + a tRNA + H(+). Its function is as follows. Hydrolyzes ribosome-free peptidyl-tRNAs (with 1 or more amino acids incorporated), which drop off the ribosome during protein synthesis, or as a result of ribosome stalling. Functionally, catalyzes the release of premature peptidyl moieties from peptidyl-tRNA molecules trapped in stalled 50S ribosomal subunits, and thus maintains levels of free tRNAs and 50S ribosomes. This Hydrogenobaculum sp. (strain Y04AAS1) protein is Peptidyl-tRNA hydrolase.